We begin with the raw amino-acid sequence, 153 residues long: uncharacterized protein (153 aa).

The N-terminal stretch at 1-19 (MRKYIPLVLFIFSWPVLCA) is a signal peptide. Catalysis depends on residues Arg46, Glu54, and Arg88.

This sequence belongs to the thermonuclease family.

This is an uncharacterized protein from Escherichia coli.